Reading from the N-terminus, the 306-residue chain is Tyrosine recombinase XerD (306 aa).

Residues 1–83 enclose the Core-binding (CB) domain; that stretch reads MGFIAQFLEM…TIKSYYEFLI (83 aa). The Tyr recombinase domain maps to 104–299; sequence KLPEILSIAQ…QTNHLKKALL (196 aa). Active-site residues include Arg-145, Lys-176, His-251, Arg-254, and His-277. The active-site O-(3'-phospho-DNA)-tyrosine intermediate is the Tyr-286.

It belongs to the 'phage' integrase family. XerD subfamily. As to quaternary structure, forms a cyclic heterotetrameric complex composed of two molecules of XerC and two molecules of XerD.

It is found in the cytoplasm. Site-specific tyrosine recombinase, which acts by catalyzing the cutting and rejoining of the recombining DNA molecules. The XerC-XerD complex is essential to convert dimers of the bacterial chromosome into monomers to permit their segregation at cell division. It also contributes to the segregational stability of plasmids. The polypeptide is Tyrosine recombinase XerD (Rickettsia conorii (strain ATCC VR-613 / Malish 7)).